Here is a 184-residue protein sequence, read N- to C-terminus: dCTP deaminase (184 aa).

DCTP-binding positions include 107 to 112, 131 to 133, glutamine 152, tyrosine 166, and glutamine 176; these read KSTYAR and TLE. Glutamate 133 acts as the Proton donor/acceptor in catalysis.

The protein belongs to the dCTP deaminase family. Homotrimer.

The enzyme catalyses dCTP + H2O + H(+) = dUTP + NH4(+). The protein operates within pyrimidine metabolism; dUMP biosynthesis; dUMP from dCTP (dUTP route): step 1/2. In terms of biological role, catalyzes the deamination of dCTP to dUTP. This is dCTP deaminase from Gemmatimonas aurantiaca (strain DSM 14586 / JCM 11422 / NBRC 100505 / T-27).